The primary structure comprises 450 residues: Phosphoglucosamine mutase (450 aa).

Catalysis depends on Ser102, which acts as the Phosphoserine intermediate. 4 residues coordinate Mg(2+): Ser102, Asp244, Asp246, and Asp248. Ser102 carries the post-translational modification Phosphoserine.

It belongs to the phosphohexose mutase family. It depends on Mg(2+) as a cofactor. In terms of processing, activated by phosphorylation.

The enzyme catalyses alpha-D-glucosamine 1-phosphate = D-glucosamine 6-phosphate. In terms of biological role, catalyzes the conversion of glucosamine-6-phosphate to glucosamine-1-phosphate. The protein is Phosphoglucosamine mutase of Syntrophomonas wolfei subsp. wolfei (strain DSM 2245B / Goettingen).